The primary structure comprises 400 residues: 3-phenylpropionate/cinnamic acid dioxygenase ferredoxin--NAD(+) reductase component (400 aa).

5 to 36 (TIIIVGGGQAAAMAAASLRQQGFTGELHLFSD) provides a ligand contact to FAD. Residue 146-174 (SVVIVGAGTIGLELAASATQRRCKVTVIE) participates in NAD(+) binding.

This sequence belongs to the bacterial ring-hydroxylating dioxygenase ferredoxin reductase family. As to quaternary structure, this dioxygenase system consists of four proteins: the two subunits of the hydroxylase component (HcaE and HcaF), a ferredoxin (HcaC) and a ferredoxin reductase (HcaD). FAD is required as a cofactor.

It carries out the reaction 2 reduced [2Fe-2S]-[ferredoxin] + NAD(+) + H(+) = 2 oxidized [2Fe-2S]-[ferredoxin] + NADH. It participates in aromatic compound metabolism; 3-phenylpropanoate degradation. Functionally, part of the multicomponent 3-phenylpropionate dioxygenase, that converts 3-phenylpropionic acid (PP) and cinnamic acid (CI) into 3-phenylpropionate-dihydrodiol (PP-dihydrodiol) and cinnamic acid-dihydrodiol (CI-dihydrodiol), respectively. This chain is 3-phenylpropionate/cinnamic acid dioxygenase ferredoxin--NAD(+) reductase component, found in Escherichia coli (strain 55989 / EAEC).